The chain runs to 330 residues: Ketol-acid reductoisomerase (NADP(+)) (330 aa).

The KARI N-terminal Rossmann domain occupies 1–181; sequence MNVYYEQDAD…GGTKAGVIET (181 aa). NADP(+) is bound by residues 24-27, Arg47, Ser50, Ser52, and 82-85; these read YGSQ and DQNQ. His107 is an active-site residue. Gly133 is an NADP(+) binding site. One can recognise a KARI C-terminal knotted domain in the interval 182 to 327; it reads SIKNETETDL…AKLRDMMSWL (146 aa). The Mg(2+) site is built by Asp190, Glu194, Glu226, and Glu230. A substrate-binding site is contributed by Ser251.

It belongs to the ketol-acid reductoisomerase family. It depends on Mg(2+) as a cofactor.

It catalyses the reaction (2R)-2,3-dihydroxy-3-methylbutanoate + NADP(+) = (2S)-2-acetolactate + NADPH + H(+). The catalysed reaction is (2R,3R)-2,3-dihydroxy-3-methylpentanoate + NADP(+) = (S)-2-ethyl-2-hydroxy-3-oxobutanoate + NADPH + H(+). It participates in amino-acid biosynthesis; L-isoleucine biosynthesis; L-isoleucine from 2-oxobutanoate: step 2/4. The protein operates within amino-acid biosynthesis; L-valine biosynthesis; L-valine from pyruvate: step 2/4. In terms of biological role, involved in the biosynthesis of branched-chain amino acids (BCAA). Catalyzes an alkyl-migration followed by a ketol-acid reduction of (S)-2-acetolactate (S2AL) to yield (R)-2,3-dihydroxy-isovalerate. In the isomerase reaction, S2AL is rearranged via a Mg-dependent methyl migration to produce 3-hydroxy-3-methyl-2-ketobutyrate (HMKB). In the reductase reaction, this 2-ketoacid undergoes a metal-dependent reduction by NADPH to yield (R)-2,3-dihydroxy-isovalerate. This is Ketol-acid reductoisomerase (NADP(+)) from Pelodictyon phaeoclathratiforme (strain DSM 5477 / BU-1).